A 500-amino-acid polypeptide reads, in one-letter code: L-arabinose isomerase (500 aa).

Residues E306, E333, H350, and H450 each contribute to the Mn(2+) site.

The protein belongs to the arabinose isomerase family. Homohexamer. Mn(2+) is required as a cofactor.

It carries out the reaction beta-L-arabinopyranose = L-ribulose. It functions in the pathway carbohydrate degradation; L-arabinose degradation via L-ribulose; D-xylulose 5-phosphate from L-arabinose (bacterial route): step 1/3. In terms of biological role, catalyzes the conversion of L-arabinose to L-ribulose. The protein is L-arabinose isomerase of Escherichia fergusonii (strain ATCC 35469 / DSM 13698 / CCUG 18766 / IAM 14443 / JCM 21226 / LMG 7866 / NBRC 102419 / NCTC 12128 / CDC 0568-73).